Reading from the N-terminus, the 184-residue chain is Adenylate kinase (184 aa).

12–17 is an ATP binding site; that stretch reads GAGKGT. Residues 32-61 are NMP; it reads STGELLRKEIDLDTDLGKQVKDIMNRGELV. Residues threonine 33, arginine 38, 59-61, 85-88, and glutamine 92 each bind AMP; these read ELV and GYPR. The segment at 126–132 is LID; sequence IRGRKDD. Position 127 (arginine 127) interacts with ATP. Positions 129 and 140 each coordinate AMP. Residue glycine 168 participates in ATP binding.

The protein belongs to the adenylate kinase family. In terms of assembly, monomer.

It is found in the cytoplasm. The enzyme catalyses AMP + ATP = 2 ADP. Its pathway is purine metabolism; AMP biosynthesis via salvage pathway; AMP from ADP: step 1/1. Its function is as follows. Catalyzes the reversible transfer of the terminal phosphate group between ATP and AMP. Plays an important role in cellular energy homeostasis and in adenine nucleotide metabolism. The protein is Adenylate kinase of Prochlorococcus marinus subsp. pastoris (strain CCMP1986 / NIES-2087 / MED4).